The following is a 331-amino-acid chain: Carbonic anhydrase-related protein 11 (331 aa).

The N-terminal stretch at 1 to 23 is a signal peptide; that stretch reads MGGAARLSAPRALVLWAVLGAAA. Residues 33 to 306 form the Alpha-carbonic anhydrase domain; the sequence is DWWSYKDNLQ…LAHRALRGNR (274 aa). Asparagine 118, asparagine 170, asparagine 189, and asparagine 263 each carry an N-linked (GlcNAc...) asparagine glycan. Residues 303–331 form a disordered region; it reads RGNRDPRHPERRCRGPNYRLHVDGAPHGR. Positions 322-331 are enriched in basic and acidic residues; that stretch reads LHVDGAPHGR.

It belongs to the alpha-carbonic anhydrase family.

Its subcellular location is the secreted. Does not have a catalytic activity. The protein is Carbonic anhydrase-related protein 11 (CA11) of Sus scrofa (Pig).